A 957-amino-acid chain; its full sequence is Glycine dehydrogenase (decarboxylating) (957 aa).

Lys702 is subject to N6-(pyridoxal phosphate)lysine.

The protein belongs to the GcvP family. The glycine cleavage system is composed of four proteins: P, T, L and H. Pyridoxal 5'-phosphate serves as cofactor.

It carries out the reaction N(6)-[(R)-lipoyl]-L-lysyl-[glycine-cleavage complex H protein] + glycine + H(+) = N(6)-[(R)-S(8)-aminomethyldihydrolipoyl]-L-lysyl-[glycine-cleavage complex H protein] + CO2. The glycine cleavage system catalyzes the degradation of glycine. The P protein binds the alpha-amino group of glycine through its pyridoxal phosphate cofactor; CO(2) is released and the remaining methylamine moiety is then transferred to the lipoamide cofactor of the H protein. The chain is Glycine dehydrogenase (decarboxylating) from Synechococcus sp. (strain RCC307).